Here is a 337-residue protein sequence, read N- to C-terminus: Ferredoxin--NADP reductase (337 aa).

Aspartate 35, glutamine 43, tyrosine 48, alanine 88, phenylalanine 122, aspartate 289, and threonine 330 together coordinate FAD.

This sequence belongs to the ferredoxin--NADP reductase type 2 family. As to quaternary structure, homodimer. FAD is required as a cofactor.

The catalysed reaction is 2 reduced [2Fe-2S]-[ferredoxin] + NADP(+) + H(+) = 2 oxidized [2Fe-2S]-[ferredoxin] + NADPH. In Ehrlichia ruminantium (strain Welgevonden), this protein is Ferredoxin--NADP reductase.